The sequence spans 237 residues: Mitochondrial carrier-like protein L276 (237 aa).

3 Solcar repeats span residues 1–83 (MAKY…FENK), 85–161 (YPYT…LNEY), and 164–233 (KPVV…LNKK). The next 5 membrane-spanning stretches (helical) occupy residues 11 to 27 (AIATIVAEIITLPICTF), 60 to 76 (VPAIMSQTYSTSSKYFL), 91 to 108 (MINGIISGIMTSLITHPI), 140 to 160 (SFGKTVISSSMFFPLYETLNE), and 166 to 183 (VVSSMLTAIISTTIMQPL). The Substrate recognition signature appears at 191 to 196 (IYGLSL). Residues 205-226 (YYRGLSLNLMRIVPHFVITMTT) traverse the membrane as a helical segment.

The protein belongs to the mitochondrial carrier (TC 2.A.29) family.

Its subcellular location is the host mitochondrion inner membrane. Functionally, transports dATP and to a lesser extent dTTP, TTP, UTP and ADP, possibly across the mitochondrial inner membrane. The sequence is that of Mitochondrial carrier-like protein L276 from Acanthamoeba polyphaga (Amoeba).